A 480-amino-acid chain; its full sequence is Peptidase S41 family protein ustP (480 aa).

A disordered region spans residues 78–97; that stretch reads CMPNKKSRPPDPRPSLAVGK. Residues 134-336 are peptidase S41 domain; it reads DVAVLQLPTF…LKQQGVRSIV (203 aa).

It belongs to the peptidase S41A family.

It participates in mycotoxin biosynthesis. In terms of biological role, peptidase S41 family protein; part of the gene cluster that mediates the biosynthesis of the secondary metabolite ustiloxin B, an antimitotic tetrapeptide. First, ustA is processed by the subtilisin-like endoprotease Kex2 that is outside the ustiloxin B gene cluster, at the C-terminal side of Arg-Lys, after transfer to Golgi apparatus through the endoplasmic reticulum (ER). Cleavage by KEX2 generates 16 peptides YAIG-I to YAIG-XVI. To process the precursor peptide further, at least two peptidases are necessary to cleave the N-terminal and C-terminal sides of the Tyr-Ala-Ile-Gly core peptide which serves as backbone for the synthesis of ustiloxin B, through cyclization and modification of the tyrosine with a non-protein coding amino acid, norvaline. One of the two peptidases must be the serine peptidase ustP; and the other pepdidase is probably ustH. Macrocyclization of the core peptide derived from ustA requires the tyrosinase ustQ, as well as the homologous oxidases ustYa and ustYb, and leads to the production of the first cyclization product N-desmethylustiloxin F. For the formation of N-desmethylustiloxin F, three oxidation steps are required, hydroxylation at the benzylic position, hydroxylation at either the aromatic ring of Tyr or beta-position of Ile, and oxidative cyclization. UstQ may catalyze the oxidation of a phenol moiety, whereas the ustYa and ustYb are most likely responsible for the remaining two-step oxidations. N-desmethylustiloxin F is then methylated by ustM to yield ustiloxin F which in turn substrate of the cytochrome P450 monooxygenase ustC which catalyzes the formation of S-deoxyustiloxin H. The flavoprotein monooxygenases ustF1 and ustF2 then participate in the modification of the side chain of S-deoxyustiloxin H, leading to the synthesis of an oxime intermediate, via ustiloxin H. Finally, carboxylative dehydration performed by the cysteine desulfurase-like protein ustD yields ustiloxin B. This is Peptidase S41 family protein ustP from Aspergillus flavus (strain ATCC 200026 / FGSC A1120 / IAM 13836 / NRRL 3357 / JCM 12722 / SRRC 167).